A 565-amino-acid polypeptide reads, in one-letter code: NAD-dependent malic enzyme (565 aa).

Tyr104 (proton donor) is an active-site residue. Residue Arg157 participates in NAD(+) binding. Lys175 acts as the Proton acceptor in catalysis. 3 residues coordinate a divalent metal cation: Glu246, Asp247, and Asp270. Positions 270 and 418 each coordinate NAD(+).

Belongs to the malic enzymes family. In terms of assembly, homotetramer. Mg(2+) serves as cofactor. Mn(2+) is required as a cofactor.

The enzyme catalyses (S)-malate + NAD(+) = pyruvate + CO2 + NADH. The catalysed reaction is oxaloacetate + H(+) = pyruvate + CO2. This is NAD-dependent malic enzyme from Klebsiella pneumoniae subsp. pneumoniae (strain ATCC 700721 / MGH 78578).